We begin with the raw amino-acid sequence, 172 residues long: Cytidylate kinase (172 aa).

Residue 7–15 participates in ATP binding; sequence GLAGTGTTT.

It belongs to the cytidylate kinase family. Type 2 subfamily.

The protein resides in the cytoplasm. It carries out the reaction CMP + ATP = CDP + ADP. It catalyses the reaction dCMP + ATP = dCDP + ADP. The polypeptide is Cytidylate kinase (Methanobrevibacter smithii (strain ATCC 35061 / DSM 861 / OCM 144 / PS)).